The chain runs to 181 residues: CD160 antigen (181 aa).

The first 24 residues, Met1 to Gly24, serve as a signal peptide directing secretion. Residues Gly25–Thr133 form the Ig-like V-type domain. Residue Asn28 is glycosylated (N-linked (GlcNAc...) asparagine). 2 cysteine pairs are disulfide-bonded: Cys44/Cys112 and Cys61/Cys68. Residue Asn137 is glycosylated (N-linked (GlcNAc...) asparagine). Ser159 carries GPI-anchor amidated serine lipidation. The propeptide at Ser160–Leu181 is removed in mature form.

In terms of assembly, homomultimer; disulfide-linked. Interacts with HLA-G. Interacts with HLA-A2-B2M in complex with an HIV-derived peptide. Interacts with TNFRSF14 (via cysteine-rich domain 1); this interaction is direct. Interacts with LCK and CD247/CD3 zeta chain. As to expression, expression is restricted to functional NK and cytotoxic T lymphocytes. Expressed in viral-specific effector memory and terminally differentiated effector memory CD8+ T cells. Expressed in memory and activated CD4+ T cell subsets (at protein level). Expressed at high levels in intraepithelial lymphocytes (at protein level). Expressed in both alpha-beta and gamma-delta CD8+ T cell subsets (at protein level). Expressed in umbilical vein endothelial cells (at protein level). Expressed in monocytes and at lower levels in B cells. Isoform 3: Expressed exclusively in activated NK cells (at protein level).

It is found in the cell membrane. It localises to the secreted. Functionally, receptor on immune cells capable to deliver stimulatory or inhibitory signals that regulate cell activation and differentiation. Exists as a GPI-anchored and as a transmembrane form, each likely initiating distinct signaling pathways via phosphoinositol 3-kinase in activated NK cells and via LCK and CD247/CD3 zeta chain in activated T cells. Receptor for both classical and non-classical MHC class I molecules. In the context of acute viral infection, recognizes HLA-C and triggers NK cell cytotoxic activity, likely playing a role in anti-viral innate immune response. On CD8+ T cells, binds HLA-A2-B2M in complex with a viral peptide and provides a costimulatory signal to activated/memory T cells. Upon persistent antigen stimulation, such as occurs during chronic viral infection, may progressively inhibit TCR signaling in memory CD8+ T cells, contributing to T cell exhaustion. On endothelial cells, recognizes HLA-G and controls angiogenesis in immune privileged sites. Receptor or ligand for TNF superfamily member TNFRSF14, participating in bidirectional cell-cell contact signaling between antigen presenting cells and lymphocytes. Upon ligation of TNFRSF14, provides stimulatory signal to NK cells enhancing IFNG production and anti-tumor immune response. On activated CD4+ T cells, interacts with TNFRSF14 and down-regulates CD28 costimulatory signaling, restricting memory and alloantigen-specific immune response. In the context of bacterial infection, acts as a ligand for TNFRSF14 on epithelial cells, triggering the production of antimicrobial proteins and pro-inflammatory cytokines. In terms of biological role, the soluble GPI-cleaved form, usually released by activated lymphocytes, might play an immune regulatory role by limiting lymphocyte effector functions. The sequence is that of CD160 antigen from Homo sapiens (Human).